The primary structure comprises 245 residues: Thiamine phosphate phosphatase-like protein (245 aa).

Asp9 (nucleophile) is an active-site residue. Mg(2+)-binding residues include Asp9, Asp11, and Asp179. The Proton donor role is filled by Asp11.

Belongs to the HAD-like hydrolase superfamily. Monomer. Requires Mg(2+) as cofactor.

The enzyme catalyses thiamine phosphate + H2O = thiamine + phosphate. Its function is as follows. HAD-like hydrolase that has a thiamine monophosphate phosphatase activity in a heterologous system. Does not contribute to thiamine monophosphate phosphatase activity in planta. This chain is Thiamine phosphate phosphatase-like protein, found in Arabidopsis thaliana (Mouse-ear cress).